Consider the following 350-residue polypeptide: Beta-hexosaminidase (350 aa).

Residues Asp-62, Arg-70, Arg-133, and 163-164 each bind substrate; that span reads KH. Residue His-176 is the Proton donor/acceptor of the active site. The Nucleophile role is filled by Asp-248.

The protein belongs to the glycosyl hydrolase 3 family. NagZ subfamily.

Its subcellular location is the cytoplasm. The catalysed reaction is Hydrolysis of terminal non-reducing N-acetyl-D-hexosamine residues in N-acetyl-beta-D-hexosaminides.. The protein operates within cell wall biogenesis; peptidoglycan recycling. Plays a role in peptidoglycan recycling by cleaving the terminal beta-1,4-linked N-acetylglucosamine (GlcNAc) from peptide-linked peptidoglycan fragments, giving rise to free GlcNAc, anhydro-N-acetylmuramic acid and anhydro-N-acetylmuramic acid-linked peptides. The chain is Beta-hexosaminidase from Haemophilus influenzae (strain PittEE).